The sequence spans 237 residues: Urease accessory protein UreF (237 aa).

Belongs to the UreF family. As to quaternary structure, ureD, UreF and UreG form a complex that acts as a GTP-hydrolysis-dependent molecular chaperone, activating the urease apoprotein by helping to assemble the nickel containing metallocenter of UreC. The UreE protein probably delivers the nickel.

The protein resides in the cytoplasm. Required for maturation of urease via the functional incorporation of the urease nickel metallocenter. In Rhodopseudomonas palustris (strain HaA2), this protein is Urease accessory protein UreF.